The sequence spans 1377 residues: DNA-directed RNA polymerase subunit beta' (1377 aa).

The Zn(2+) site is built by Cys-60, Cys-62, Cys-75, and Cys-78. Asp-449, Asp-451, and Asp-453 together coordinate Mg(2+). Zn(2+) contacts are provided by Cys-777, Cys-851, Cys-858, and Cys-861.

The protein belongs to the RNA polymerase beta' chain family. As to quaternary structure, the RNAP catalytic core consists of 2 alpha, 1 beta, 1 beta' and 1 omega subunit. When a sigma factor is associated with the core the holoenzyme is formed, which can initiate transcription. Mg(2+) is required as a cofactor. The cofactor is Zn(2+).

It catalyses the reaction RNA(n) + a ribonucleoside 5'-triphosphate = RNA(n+1) + diphosphate. Functionally, DNA-dependent RNA polymerase catalyzes the transcription of DNA into RNA using the four ribonucleoside triphosphates as substrates. This Borrelia hermsii (strain HS1 / DAH) protein is DNA-directed RNA polymerase subunit beta'.